The following is a 389-amino-acid chain: Large envelope protein (389 aa).

The residue at position 1 (M1) is an N-acetylmethionine. G2 carries the N-myristoyl glycine; by host lipid modification. The pre-S1 stretch occupies residues G2–A108. A pre-S region spans residues G2–N163. The Virion surface; in external conformation portion of the chain corresponds to G2–G170. The Intravirion; in internal conformation segment spans residues G2–R242. The segment at T75 to Q107 is disordered. Over residues S85–T95 the composition is skewed to polar residues. Positions M109–N163 are pre-S2. A helical membrane pass occupies residues F171–I191. Over P192–R242 the chain is Intravirion; in external conformation. Residues F243–Y263 form a helical membrane-spanning segment. The Virion surface portion of the chain corresponds to Q264–S337. The N-linked (GlcNAc...) asparagine; by host glycan is linked to N309. Residues L338–I358 traverse the membrane as a helical segment. Residues W359–W364 are Intravirion-facing. The helical transmembrane segment at G365 to V387 threads the bilayer. Residues Y388–I389 lie on the Virion surface side of the membrane.

Belongs to the orthohepadnavirus major surface antigen family. In its internal form (Li-HBsAg), interacts with the capsid protein and with the isoform S. Interacts with host chaperone CANX. As to quaternary structure, associates with host chaperone CANX through its pre-S2 N glycan; this association may be essential for isoform M proper secretion. In terms of assembly, interacts with isoform L. Interacts with the antigens of satellite virus HDV (HDVAgs); this interaction is required for encapsidation of HDV genomic RNA. Post-translationally, isoform M is N-terminally acetylated by host at a ratio of 90%, and N-glycosylated by host at the pre-S2 region. Myristoylated.

It is found in the virion membrane. The large envelope protein exists in two topological conformations, one which is termed 'external' or Le-HBsAg and the other 'internal' or Li-HBsAg. In its external conformation the protein attaches the virus to cell receptors and thereby initiating infection. This interaction determines the species specificity and liver tropism. This attachment induces virion internalization predominantly through caveolin-mediated endocytosis. The large envelope protein also assures fusion between virion membrane and endosomal membrane. In its internal conformation the protein plays a role in virion morphogenesis and mediates the contact with the nucleocapsid like a matrix protein. Functionally, the middle envelope protein plays an important role in the budding of the virion. It is involved in the induction of budding in a nucleocapsid independent way. In this process the majority of envelope proteins bud to form subviral lipoprotein particles of 22 nm of diameter that do not contain a nucleocapsid. This chain is Large envelope protein, found in Pan troglodytes (Chimpanzee).